Consider the following 843-residue polypeptide: Structure-specific endonuclease subunit SLX4 (843 aa).

Disordered regions lie at residues 26-111 (SPPS…KTTT), 281-313 (AIPT…QKGK), 339-377 (NVAP…NGPP), 603-655 (SKTF…AKAL), and 729-748 (ATPN…FSIE). Polar residues-rich tracts occupy residues 50-69 (ASFS…NGEN) and 285-301 (PTES…SSKQ). The segment covering 302 to 311 (QRVKAKKPQK) has biased composition (basic residues). Polar residues-rich tracts occupy residues 349 to 372 (NISN…TLKN) and 603 to 616 (SKTF…NQGT). Basic and acidic residues predominate over residues 617–636 (DDARKNGFRKENHSDVRVRP). Residues 739–748 (RSSSTSFSIE) show a composition bias toward low complexity.

It belongs to the SLX4 family. As to quaternary structure, forms a heterodimer with SLX1. In terms of processing, phosphorylated in response to DNA damage.

Its subcellular location is the nucleus. Its function is as follows. Regulatory subunit of the SLX1-SLX4 structure-specific endonuclease that resolves DNA secondary structures generated during DNA repair and recombination. Has endonuclease activity towards branched DNA substrates, introducing single-strand cuts in duplex DNA close to junctions with ss-DNA. The protein is Structure-specific endonuclease subunit SLX4 of Ajellomyces capsulatus (strain G186AR / H82 / ATCC MYA-2454 / RMSCC 2432) (Darling's disease fungus).